Here is a 278-residue protein sequence, read N- to C-terminus: Antiviral protein MAP (278 aa).

An N-terminal signal peptide occupies residues 1-28 (MLTTTKVFFLLLTTWITWYAIVNPQSRA). Cysteine 64 and cysteine 248 are disulfide-bonded. Glutamate 196 is an active-site residue.

The enzyme catalyses Endohydrolysis of the N-glycosidic bond at one specific adenosine on the 28S rRNA.. Its function is as follows. Inhibits viral infection of plants, and protein synthesis in vitro. In Mirabilis jalapa (Garden four-o'clock), this protein is Antiviral protein MAP.